The following is a 233-amino-acid chain: 5'-methylthioadenosine/S-adenosylhomocysteine nucleosidase (233 aa).

Catalysis depends on Glu12, which acts as the Proton acceptor. Substrate is bound by residues Gly78, Ile156, and 177–178 (ME). Asp201 (proton donor) is an active-site residue.

It belongs to the PNP/UDP phosphorylase family. MtnN subfamily.

It carries out the reaction S-adenosyl-L-homocysteine + H2O = S-(5-deoxy-D-ribos-5-yl)-L-homocysteine + adenine. The enzyme catalyses S-methyl-5'-thioadenosine + H2O = 5-(methylsulfanyl)-D-ribose + adenine. It catalyses the reaction 5'-deoxyadenosine + H2O = 5-deoxy-D-ribose + adenine. It functions in the pathway amino-acid biosynthesis; L-methionine biosynthesis via salvage pathway; S-methyl-5-thio-alpha-D-ribose 1-phosphate from S-methyl-5'-thioadenosine (hydrolase route): step 1/2. Its function is as follows. Catalyzes the irreversible cleavage of the glycosidic bond in both 5'-methylthioadenosine (MTA) and S-adenosylhomocysteine (SAH/AdoHcy) to adenine and the corresponding thioribose, 5'-methylthioribose and S-ribosylhomocysteine, respectively. Also cleaves 5'-deoxyadenosine, a toxic by-product of radical S-adenosylmethionine (SAM) enzymes, into 5-deoxyribose and adenine. The protein is 5'-methylthioadenosine/S-adenosylhomocysteine nucleosidase of Listeria monocytogenes serotype 4b (strain CLIP80459).